A 102-amino-acid chain; its full sequence is Enhancer of rudimentary homolog (102 aa).

This sequence belongs to the E(R) family. As to quaternary structure, homodimer.

Functionally, may have a role in the cell cycle. This Taenia solium (Pork tapeworm) protein is Enhancer of rudimentary homolog (ERH).